A 274-amino-acid polypeptide reads, in one-letter code: Penicillin-insensitive murein endopeptidase (274 aa).

The N-terminal stretch at 1 to 19 is a signal peptide; sequence MNKTAIALLALLASSVSLA. 3 disulfide bridges follow: cysteine 44–cysteine 265, cysteine 187–cysteine 235, and cysteine 216–cysteine 223. Zn(2+) is bound by residues histidine 110, histidine 113, aspartate 120, aspartate 147, histidine 150, and histidine 211. Residues 227-274 are disordered; that stretch reads PLPPPGDGCGAELQSWFEPPKPGTTKPEKKTPPPLPPSCQALLDEHVI.

This sequence belongs to the peptidase M74 family. Dimer. Zn(2+) serves as cofactor.

Its subcellular location is the periplasm. Its function is as follows. Murein endopeptidase that cleaves the D-alanyl-meso-2,6-diamino-pimelyl amide bond that connects peptidoglycan strands. Likely plays a role in the removal of murein from the sacculus. This chain is Penicillin-insensitive murein endopeptidase, found in Escherichia coli O157:H7.